The chain runs to 500 residues: Dipeptide and tripeptide permease A (500 aa).

The Cytoplasmic portion of the chain corresponds to Met1–Lys21. The helical transmembrane segment at Ala22–Met44 threads the bilayer. Topologically, residues Ala45 to Ser59 are periplasmic. Residues Ile60 to Leu80 form a helical membrane-spanning segment. At Gly81–Arg89 the chain is on the cytoplasmic side. The helical transmembrane segment at Val90–His110 threads the bilayer. Asp111 is a topological domain (periplasmic). The helical transmembrane segment at Ala112–Asn132 threads the bilayer. At Pro133–Thr153 the chain is on the cytoplasmic side. The helical transmembrane segment at Met154–Ala174 threads the bilayer. At Ala175–Gly178 the chain is on the periplasmic side. A helical membrane pass occupies residues Trp179 to Phe199. The Cytoplasmic portion of the chain corresponds to Cys200–Arg219. A helical transmembrane segment spans residues Asn220–His240. At Asn241 to Arg246 the chain is on the periplasmic side. A helical membrane pass occupies residues Met247–Met267. At Lys268–Lys274 the chain is on the cytoplasmic side. Residues Met275–Met295 traverse the membrane as a helical segment. Residues Pro296–Gln320 lie on the Periplasmic side of the membrane. The helical transmembrane segment at Tyr321–Asn341 threads the bilayer. The Cytoplasmic portion of the chain corresponds to Lys342–Lys352. A helical membrane pass occupies residues Phe353–Phe373. Residues Ala374–Gly378 are Periplasmic-facing. The helical transmembrane segment at Ile379–Ile399 threads the bilayer. The Cytoplasmic segment spans residues Ser400–Arg414. The chain crosses the membrane as a helical span at residues Leu415–Gly435. Topologically, residues Tyr436 to Arg459 are periplasmic. Residues Val460–Pro480 form a helical membrane-spanning segment. The Cytoplasmic portion of the chain corresponds to Lys481–Ala500.

It belongs to the major facilitator superfamily. Proton-dependent oligopeptide transporter (POT/PTR) (TC 2.A.17) family. DtpA subfamily. Monomer. Has a crown-like structure with a diameter of 8 nm and a central density.

The protein resides in the cell inner membrane. Functionally, proton-dependent permease that transports di- and tripeptides as well as structurally related peptidomimetics such as aminocephalosporins into the cell. Has a clear preference for dipeptides and tripeptides composed of L-amino acids, and discriminates dipeptides on the basis of the position of charges within the substrate. The protein is Dipeptide and tripeptide permease A (dtpA) of Escherichia coli (strain K12).